A 423-amino-acid polypeptide reads, in one-letter code: UPF0229 protein PSPA7_0730 (423 aa).

The segment at 84 to 107 (AGEHIARPSGGGGGRGGGKASNSG) is disordered. Over residues 92 to 102 (SGGGGGRGGGK) the composition is skewed to gly residues.

The protein belongs to the UPF0229 family.

This is UPF0229 protein PSPA7_0730 from Pseudomonas paraeruginosa (strain DSM 24068 / PA7) (Pseudomonas aeruginosa (strain PA7)).